Consider the following 368-residue polypeptide: MSESQKKVIVGMSGGVDSSVSAYLLLQQGYKVEGLFMKNWEEDDGEEYCTAAADLADAQAVCDKLGIELHTVNFAAEYWDNVFELFLEEYKAGRTPNPDILCNKEIKFKAFLEFAAEDLGADYIATGHYVRRADVDGKSQLLRGLDGNKDQSYFLYTLSHEQIAQSLFPVGELEKPQVRKIAEELDLITAKKKDSTGICFIGERKFRDFLGRYLPAQPGKILTVDGEEIGTHQGLMYHTLGQRKGLGIGGTKEGSEDPWYVVDKDVENNILIVAQGHDHPRLMSVGLIAQQLHWVDREPLQGTLRCTVKTRYRQTDIPCTVTALDEDRIEVRFDEPVAAVTPGQSAVFYLGEVCLGGGIIEQRLPLQS.

ATP contacts are provided by residues 11–18 and methionine 37; that span reads GMSGGVDS. An interaction with target base in tRNA region spans residues 97 to 99; it reads NPD. Cysteine 102 serves as the catalytic Nucleophile. The cysteines at positions 102 and 199 are disulfide-linked. Glycine 127 lines the ATP pocket. An interaction with tRNA region spans residues 149-151; that stretch reads KDQ. The Cysteine persulfide intermediate role is filled by cysteine 199. The interaction with tRNA stretch occupies residues 311–312; the sequence is RY.

This sequence belongs to the MnmA/TRMU family. In terms of assembly, interacts with TusE.

The protein resides in the cytoplasm. It carries out the reaction S-sulfanyl-L-cysteinyl-[protein] + uridine(34) in tRNA + AH2 + ATP = 2-thiouridine(34) in tRNA + L-cysteinyl-[protein] + A + AMP + diphosphate + H(+). In terms of biological role, catalyzes the 2-thiolation of uridine at the wobble position (U34) of tRNA(Lys), tRNA(Glu) and tRNA(Gln), leading to the formation of s(2)U34, the first step of tRNA-mnm(5)s(2)U34 synthesis. Sulfur is provided by IscS, via a sulfur-relay system. Binds ATP and its substrate tRNAs. The protein is tRNA-specific 2-thiouridylase MnmA of Klebsiella pneumoniae (strain 342).